The sequence spans 406 residues: Corticosteroid-binding globulin (406 aa).

Positions 1–22 (MPLLLYTCLLWLLSSGLWTVQA) are cleaved as a signal peptide. N-linked (GlcNAc...) asparagine glycans are attached at residues Asn31 and Asn96. Gln255 provides a ligand contact to cortisol. N-linked (GlcNAc...) asparagine glycosylation occurs at Asn261. Asp287 serves as a coordination point for cortisol. N-linked (GlcNAc...) asparagine glycans are attached at residues Asn331 and Asn360. Trp394 is a cortisol binding site.

Belongs to the serpin family. As to expression, expressed by the liver; secreted in plasma.

Its subcellular location is the secreted. In terms of biological role, major transport protein for glucocorticoids and progestins in the blood of almost all vertebrate species. This chain is Corticosteroid-binding globulin (SERPINA6), found in Saimiri sciureus (Common squirrel monkey).